The following is a 460-amino-acid chain: GTPase Der (460 aa).

EngA-type G domains are found at residues 3–167 (FTFA…PEPD) and 189–364 (IRVA…ATWN). GTP is bound by residues 9 to 16 (GRPNVGKS), 56 to 60 (DTAGL), 119 to 122 (NKSE), 195 to 202 (GRPNAGKS), 242 to 246 (DTAGL), and 307 to 310 (NKWD). Residues 365–449 (RRVPTAALNR…PVRIMLREKA (85 aa)) form the KH-like domain.

It belongs to the TRAFAC class TrmE-Era-EngA-EngB-Septin-like GTPase superfamily. EngA (Der) GTPase family. In terms of assembly, associates with the 50S ribosomal subunit.

GTPase that plays an essential role in the late steps of ribosome biogenesis. This is GTPase Der from Rhodopseudomonas palustris (strain BisA53).